The primary structure comprises 55 residues: Large ribosomal subunit protein bL33 (55 aa).

Basic and acidic residues predominate over residues 1–11 (MAKGGREKIKL). Positions 1 to 29 (MAKGGREKIKLESTAGTGHFYTTTKNKKT) are disordered. The span at 14 to 24 (TAGTGHFYTTT) shows a compositional bias: polar residues.

It belongs to the bacterial ribosomal protein bL33 family.

The chain is Large ribosomal subunit protein bL33 from Thiobacillus denitrificans (strain ATCC 25259 / T1).